The chain runs to 513 residues: Sodium/potassium/calcium exchanger 5 (513 aa).

The signal sequence occupies residues 1-35; that stretch reads MRTDVFLQRRKRRDVLLSIIALLLLIFAIVHLVFC. The Extracellular portion of the chain corresponds to 36-78; sequence AGLSFQGSSSARVRRDLENASECVQPQSSEFPEGFFTVQERKD. A helical transmembrane segment spans residues 79-99; that stretch reads GGILIYFMIIFYMLLSVSIVC. Over 100–123 the chain is Cytoplasmic; the sequence is DEYFLPSLEVISERLGLSQDVAGA. Residues 124–144 form a helical membrane-spanning segment; it reads TFMAAGSSAPELVTAFLGVFV. Residues 145 to 148 lie on the Extracellular side of the membrane; the sequence is TKGD. The helical transmembrane segment at 149–169 threads the bilayer; the sequence is IGVSTIMGSAVYNLLCICAAC. Residues 170–181 are Cytoplasmic-facing; sequence GLLSSAVGRLSC. A helical membrane pass occupies residues 182–202; the sequence is WPLFRDCVAYAISVAAVIAII. The Extracellular portion of the chain corresponds to 203-207; sequence SDNRV. A helical transmembrane segment spans residues 208-228; that stretch reads YWYDGACLLLVYGVYVAVLCF. At 229 to 315 the chain is on the cytoplasmic side; sequence DLRISEYVMQ…KSVFSMPDHD (87 aa). A helical transmembrane segment spans residues 316–336; it reads LKRILWVLSLPVSTLLFVSVP. Topologically, residues 337–350 are extracellular; it reads DCRRPFWKNFYMLT. A helical transmembrane segment spans residues 351-371; the sequence is FLMSAVWISAFTYVLVWMVTI. Over 372-381 the chain is Cytoplasmic; that stretch reads VGETLGIPDT. A helical transmembrane segment spans residues 382-402; the sequence is VMGMTLLAAGTSIPDTVASVM. Residues 403–420 lie on the Extracellular side of the membrane; sequence VAREGKSDMAMSNIVGSN. The helical transmembrane segment at 421-441 threads the bilayer; it reads VFDMLCLGLPWFIQTVFVDVG. At 442–450 the chain is on the cytoplasmic side; it reads SPVEVNSSG. Residues 451–471 form a helical membrane-spanning segment; that stretch reads LVFMSCTLLLSIIFLFLAVHI. At 472–482 the chain is on the extracellular side; it reads NGWKLDWKLGL. The chain crosses the membrane as a helical span at residues 483 to 503; sequence VCLACYILFATLSILYELGII. The Cytoplasmic segment spans residues 504–513; it reads GNNPIRSCSD.

The protein belongs to the Ca(2+):cation antiporter (CaCA) (TC 2.A.19) family. SLC24A subfamily. In terms of tissue distribution, highly expressed in melanin-producing cells. Colocalizes with melanin biosynthesis marker dct.

The protein localises to the golgi apparatus. The protein resides in the trans-Golgi network membrane. Its subcellular location is the melanosome. It carries out the reaction Ca(2+)(out) + K(+)(out) + 4 Na(+)(in) = Ca(2+)(in) + K(+)(in) + 4 Na(+)(out). Functionally, calcium, potassium:sodium antiporter that transports 1 Ca(2+) and 1 K(+) to the melanosome in exchange for 4 cytoplasmic Na(+). Involved in pigmentation, possibly by participating in ion transport in melanosomes. Predominant sodium-calcium exchanger in melanocytes. In Danio rerio (Zebrafish), this protein is Sodium/potassium/calcium exchanger 5 (slc24a5).